A 295-amino-acid polypeptide reads, in one-letter code: 4-hydroxy-tetrahydrodipicolinate synthase (295 aa).

T48 contacts pyruvate. The active-site Proton donor/acceptor is the Y135. K163 (schiff-base intermediate with substrate) is an active-site residue. V204 is a pyruvate binding site.

Belongs to the DapA family. Homotetramer; dimer of dimers.

Its subcellular location is the cytoplasm. It carries out the reaction L-aspartate 4-semialdehyde + pyruvate = (2S,4S)-4-hydroxy-2,3,4,5-tetrahydrodipicolinate + H2O + H(+). Its pathway is amino-acid biosynthesis; L-lysine biosynthesis via DAP pathway; (S)-tetrahydrodipicolinate from L-aspartate: step 3/4. Functionally, catalyzes the condensation of (S)-aspartate-beta-semialdehyde [(S)-ASA] and pyruvate to 4-hydroxy-tetrahydrodipicolinate (HTPA). The chain is 4-hydroxy-tetrahydrodipicolinate synthase from Francisella philomiragia subsp. philomiragia (strain ATCC 25017 / CCUG 19701 / FSC 153 / O#319-036).